Consider the following 318-residue polypeptide: Cytochrome f (318 aa).

The first 34 residues, 1–34 (MQNRNFFEYPKNWIILLIPIFTTFNLLFTSDCYA), serve as a signal peptide directing secretion. Residues phenylalanine 35, cysteine 55, cysteine 58, and histidine 59 each contribute to the heme site. Residues 284–303 (LQGLLVFLFLVVLAQVFLVL) traverse the membrane as a helical segment.

This sequence belongs to the cytochrome f family. As to quaternary structure, the 4 large subunits of the cytochrome b6-f complex are cytochrome b6, subunit IV (17 kDa polypeptide, petD), cytochrome f and the Rieske protein, while the 4 small subunits are PetG, PetL, PetM and PetN. The complex functions as a dimer. Requires heme as cofactor.

The protein resides in the plastid. It is found in the chloroplast thylakoid membrane. In terms of biological role, component of the cytochrome b6-f complex, which mediates electron transfer between photosystem II (PSII) and photosystem I (PSI), cyclic electron flow around PSI, and state transitions. The protein is Cytochrome f of Chaetosphaeridium globosum (Charophycean green alga).